The sequence spans 91 residues: uncharacterized protein (91 aa).

3 consecutive transmembrane segments (helical) span residues 9–29 (LIHAIGGIIFGYLANYVYTAG), 30–50 (LGIFSGIATLIFLFIGAVIFG), and 67–87 (WLGCGVLPFFLVAIVVWVLKF).

It localises to the cell membrane. This is an uncharacterized protein from Methanocaldococcus jannaschii (strain ATCC 43067 / DSM 2661 / JAL-1 / JCM 10045 / NBRC 100440) (Methanococcus jannaschii).